Here is a 165-residue protein sequence, read N- to C-terminus: Probable cell wall protein PGA15 (165 aa).

The first 16 residues, 1–16 (MKFIIILFTLISIVTA), serve as a signal peptide directing secretion. Ser143 carries GPI-anchor amidated serine lipidation. Residues 144 to 165 (GAANYLTSFSIGTFFVFVLGLI) constitute a propeptide, removed in mature form.

It belongs to the IHD1 family. In terms of processing, the GPI-anchor is attached to the protein in the endoplasmic reticulum and serves to target the protein to the cell surface. There, the glucosamine-inositol phospholipid moiety is cleaved off and the GPI-modified mannoprotein is covalently attached via its lipidless GPI glycan remnant to the 1,6-beta-glucan of the outer cell wall layer.

The protein resides in the secreted. The protein localises to the cell wall. It localises to the membrane. Probable GPI-anchored cell wall protein that may be involved in cell wall organization, hyphal growth, as well as in virulence. This Candida albicans (strain SC5314 / ATCC MYA-2876) (Yeast) protein is Probable cell wall protein PGA15 (PGA15).